Reading from the N-terminus, the 305-residue chain is Olfactory receptor 4F4 (305 aa).

At 1 to 18 the chain is on the extracellular side; sequence MVTEFIFLGLSDSQELQT. The helical transmembrane segment at 19-42 threads the bilayer; sequence FLFMLFFVFYGGIVFGNLLIVITV. Residues 43 to 50 lie on the Cytoplasmic side of the membrane; the sequence is VSDSHLHS. Residues 51–72 form a helical membrane-spanning segment; that stretch reads PMYFLLANLSLIDLSLSSVTAP. Over 73–93 the chain is Extracellular; the sequence is KMITDFFSQRKVISFKGCLVQ. Cysteines 90 and 182 form a disulfide. Residues 94 to 113 form a helical membrane-spanning segment; it reads IFLLHFFGGSEMVILIAMGF. The Cytoplasmic segment spans residues 114–132; that stretch reads DRYIAICKPLHYTTIMCGN. A helical transmembrane segment spans residues 133–151; sequence ACVGIMAVAWGIGFLHSVS. Residues 152-188 lie on the Extracellular side of the membrane; the sequence is QLAFAVHLPFCGPNEVDSFYCDLPRVIKLACTDTYRL. The helical transmembrane segment at 189-212 threads the bilayer; sequence DIMVIANSGVLTVCSFVLLIISYT. At 213–228 the chain is on the cytoplasmic side; it reads IILMTIQHCPLDKSSK. The helical transmembrane segment at 229 to 251 threads the bilayer; the sequence is ALSTLTAHITVVLLFFGPCVFIY. The Extracellular portion of the chain corresponds to 252-262; the sequence is AWPFPIKSLDK. The chain crosses the membrane as a helical span at residues 263–282; it reads FLAVFYSVITPLLNPIIYTL. Over 283–305 the chain is Cytoplasmic; sequence RNKDMKTAIRRLRKWDAHSSVKF.

It belongs to the G-protein coupled receptor 1 family.

It localises to the cell membrane. Functionally, odorant receptor. This Homo sapiens (Human) protein is Olfactory receptor 4F4 (OR4F4).